The sequence spans 1420 residues: Putative mediator of RNA polymerase II transcription subunit 14 (1420 aa).

A coiled-coil region spans residues 1-43; that stretch reads MDQNQQQQQQQQQQQQQQQQQQQQQQQQQQQQQQQQQQQQQQQ. Low complexity-rich tracts occupy residues 1–43 and 449–474; these read MDQN…QQQQ and TTSS…NNNN. 4 disordered regions span residues 1 to 59, 449 to 490, 750 to 799, and 1389 to 1420; these read MDQN…TTPI, TTSS…NPLS, QQDI…GYKN, and QQQQ…SSIR. The span at 475-490 shows a compositional bias: polar residues; it reads GKPNLLSTKQSNNPLS. 2 stretches are compositionally biased toward low complexity: residues 755 to 795 and 1389 to 1406; these read NNNN…NGNN and QQQQ…QQQQ. Residues 1382 to 1412 are a coiled coil; it reads LLIQQQQQQQQQQQQQQQQQQQQQQIENNNF. A compositionally biased stretch (polar residues) spans 1407 to 1420; the sequence is IENNNFASASSSIR.

This sequence belongs to the Mediator complex subunit 14 family. As to quaternary structure, component of the Mediator complex.

It is found in the nucleus. In terms of biological role, component of the Mediator complex, a coactivator involved in the regulated transcription of nearly all RNA polymerase II-dependent genes. Mediator functions as a bridge to convey information from gene-specific regulatory proteins to the basal RNA polymerase II transcription machinery. Mediator is recruited to promoters by direct interactions with regulatory proteins and serves as a scaffold for the assembly of a functional preinitiation complex with RNA polymerase II and the general transcription factors. The protein is Putative mediator of RNA polymerase II transcription subunit 14 (med14) of Dictyostelium discoideum (Social amoeba).